A 1079-amino-acid polypeptide reads, in one-letter code: BRD4-interacting chromatin-remodeling complex-associated protein-like (1079 aa).

2 disordered regions span residues 51-79 (NSSN…LPLS) and 509-604 (LHLS…TPGT). Residues 68–79 (LGEGPSDGLPLS) show a composition bias toward low complexity. Residues 544–576 (SSASTAHPSLGSAVQSGSSGSNFTGDQLTQPNR) show a composition bias toward polar residues. The segment covering 590–604 (SSSKSTSTFSNTPGT) has biased composition (low complexity). The residue at position 623 (Ser623) is a Phosphoserine. Disordered regions lie at residues 669-691 (EKVV…GGQK), 837-877 (TQFG…NHDQ), and 917-954 (TSEE…TESK). Composition is skewed to basic and acidic residues over residues 918 to 928 (SEEKASRREPL) and 938 to 952 (EGHR…HGTE). Position 980 is a phosphoserine (Ser980).

In terms of assembly, component of the multiprotein chromatin-remodeling complexes SWI/SNF: SWI/SNF-A (BAF), SWI/SNF-B (PBAF) and related complexes. The canonical complex contains a catalytic subunit (either SMARCA4/BRG1/BAF190A or SMARCA2/BRM/BAF190B) and at least SMARCE1, ACTL6A/BAF53, SMARCC1/BAF155, SMARCC2/BAF170, and SMARCB1/SNF5/BAF47. Other subunits specific to each of the complexes may also be present permitting several possible combinations developmentally and tissue specific. Component of the SWI/SNF (GBAF) subcomplex, which includes at least BICRA or BICRAL (mutually exclusive), BRD9, SS18, the core BAF subunits, SMARCA2/BRM, SMARCA4/BRG1/BAF190A, ACTL6A/BAF53, SMARCC1/BAF155, and SMARCD1/BAF60A.

Functionally, component of SWI/SNF chromatin remodeling subcomplex GBAF that carries out key enzymatic activities, changing chromatin structure by altering DNA-histone contacts within a nucleosome in an ATP-dependent manner. The polypeptide is BRD4-interacting chromatin-remodeling complex-associated protein-like (Homo sapiens (Human)).